The following is a 903-amino-acid chain: Protein translocase subunit SecA (903 aa).

Residues Q87, 105–109, and D507 each bind ATP; that span reads GEGKT. Positions 854–893 are disordered; sequence STMADSSGDVKSSTAESKAPYVRDGRKVGRNEPCPCGSGK. A compositionally biased stretch (polar residues) spans 856–869; the sequence is MADSSGDVKSSTAE. Basic and acidic residues predominate over residues 874–883; the sequence is YVRDGRKVGR. 4 residues coordinate Zn(2+): C887, C889, C898, and H899.

It belongs to the SecA family. In terms of assembly, monomer and homodimer. Part of the essential Sec protein translocation apparatus which comprises SecA, SecYEG and auxiliary proteins SecDF-YajC and YidC. Requires Zn(2+) as cofactor.

The protein localises to the cell inner membrane. It localises to the cytoplasm. It catalyses the reaction ATP + H2O + cellular proteinSide 1 = ADP + phosphate + cellular proteinSide 2.. In terms of biological role, part of the Sec protein translocase complex. Interacts with the SecYEG preprotein conducting channel. Has a central role in coupling the hydrolysis of ATP to the transfer of proteins into and across the cell membrane, serving both as a receptor for the preprotein-SecB complex and as an ATP-driven molecular motor driving the stepwise translocation of polypeptide chains across the membrane. The polypeptide is Protein translocase subunit SecA (Nitrosococcus oceani (strain ATCC 19707 / BCRC 17464 / JCM 30415 / NCIMB 11848 / C-107)).